A 1151-amino-acid polypeptide reads, in one-letter code: MPCGFSPSPVAHHLVPGPPDTPAQQLRCGWTVGGWLLSLVRGLLPCLPPGARTAEGPIMVLAGPLAVSLLLPSLTLLVSHLSSSQDVSSEPSSEQQLCALSKHPTVAFEDLQPWVSNFTYPGARDFSQLALDPSGNQLIVGARNYLFRLSLANVSLLQATEWASSEDTRRSCQSKGKTEEECQNYVRVLIVAGRKVFMCGTNAFSPMCTSRQVGNLSRTIEKINGVARCPYDPRHNSTAVISSQGELYAATVIDFSGRDPAIYRSLGSGPPLRTAQYNSKWLNEPNFVAAYDIGLFAYFFLRENAVEHDCGRTVYSRVARVCKNDVGGRFLLEDTWTTFMKARLNCSRPGEVPFYYNELQSAFHLPEQDLIYGVFTTNVNSIAASAVCAFNLSAISQAFNGPFRYQENPRAAWLPIANPIPNFQCGTLPETGPNENLTERSLQDAQRLFLMSEAVQPVTPEPCVTQDSVRFSHLVVDLVQAKDTLYHVLYIGTESGTILKALSTASRSLHGCYLEELHVLPPGRREPLRSLRILHSARALFVGLRDGVLRVPLERCAAYRSQGACLGARDPYCGWDGKQQRCSTLEDSSNMSLWTQNITACPVRNVTRDGGFGPWSPWQPCEHLDGDNSGSCLCRARSCDSPRPRCGGLDCLGPAIHIANCSRNGAWTPWSSWALCSTSCGIGFQVRQRSCSNPAPRHGGRICVGKSREERFCNENTPCPVPIFWASWGSWSKCSSNCGGGMQSRRRACENGNSCLGCGVEFKTCNPEGCPEVRRNTPWTPWLPVNVTQGGARQEQRFRFTCRAPLADPHGLQFGRRRTETRTCPADGSGSCDTDALVEVLLRSGSTSPHTVSGGWAAWGPWSSCSRDCELGFRVRKRTCTNPEPRNGGLPCVGDAAEYQDCNPQACPVRGAWSCWTSWSPCSASCGGGHYQRTRSCTSPAPSPGEDICLGLHTEEALCATQACPEGWSPWSEWSKCTDDGAQSRSRHCEELLPGSSACAGNSSQSRPCPYSEIPVILPASSMEEATDCAGFNLIHLVATGISCFLGSGLLTLAVYLSCQHCQRQSQESTLVHPATPNHLHYKGGGTPKNEKYTPMEFKTLNKNNLIPDDRANFYPLQQTNVYTTTYYPSPLNKHSFRPEASPGQRCFPNS.

The Extracellular portion of the chain corresponds to 1 to 1036; sequence MPCGFSPSPV…TDCAGFNLIH (1036 aa). The 451-residue stretch at 103–553 folds into the Sema domain; that stretch reads HPTVAFEDLQ…LRDGVLRVPL (451 aa). Asn-153 carries an N-linked (GlcNAc...) asparagine glycan. Cystine bridges form between Cys-172–Cys-182 and Cys-199–Cys-208. N-linked (GlcNAc...) asparagine glycosylation is found at Asn-236 and Asn-345. Intrachain disulfides connect Cys-322/Cys-425 and Cys-346/Cys-388. N-linked (GlcNAc...) asparagine glycosylation is present at Asn-436. Residues 555–602 form the PSI domain; sequence RCAAYRSQGACLGARDPYCGWDGKQQRCSTLEDSSNMSLWTQNITACP. TSP type-1 domains follow at residues 664–720 and 722–771; these read NGAW…TPCP and PIFW…EGCP. 6 disulfide bridges follow: Cys-676-Cys-713, Cys-680-Cys-719, Cys-691-Cys-703, Cys-734-Cys-765, Cys-738-Cys-770, and Cys-749-Cys-755. A glycan (O-linked (GalNAc...) threonine) is linked at Thr-788. 3 consecutive TSP type-1 domains span residues 853–908, 910–965, and 966–1010; these read SGGW…QACP, RGAW…QACP, and EGWS…RPCP. 6 cysteine pairs are disulfide-bonded: Cys-865–Cys-902, Cys-869–Cys-907, Cys-880–Cys-892, Cys-922–Cys-959, Cys-926–Cys-964, and Cys-937–Cys-949. A helical; Signal-anchor for type III membrane protein transmembrane segment spans residues 1037-1057; it reads LVATGISCFLGSGLLTLAVYL. Residues 1058-1151 are Cytoplasmic-facing; it reads SCQHCQRQSQ…SPGQRCFPNS (94 aa).

The protein belongs to the semaphorin family.

It localises to the membrane. Functionally, may act as a positive axonal guidance cue. This Homo sapiens (Human) protein is Semaphorin-5B (SEMA5B).